The sequence spans 411 residues: Citrate synthase (411 aa).

Active-site residues include H304 and D363.

Belongs to the citrate synthase family.

It catalyses the reaction oxaloacetate + acetyl-CoA + H2O = citrate + CoA + H(+). The protein operates within carbohydrate metabolism; tricarboxylic acid cycle; isocitrate from oxaloacetate: step 1/2. This Rickettsia canadensis protein is Citrate synthase (gltA).